We begin with the raw amino-acid sequence, 430 residues long: 5-methylthioadenosine/S-adenosylhomocysteine deaminase (430 aa).

Residues H59 and H61 each contribute to the Zn(2+) site. 2 residues coordinate substrate: E88 and H181. Zn(2+) is bound at residue H208. 2 residues coordinate substrate: E211 and D296. D296 contacts Zn(2+).

The protein belongs to the metallo-dependent hydrolases superfamily. MTA/SAH deaminase family. The cofactor is Zn(2+).

It carries out the reaction S-adenosyl-L-homocysteine + H2O + H(+) = S-inosyl-L-homocysteine + NH4(+). It catalyses the reaction S-methyl-5'-thioadenosine + H2O + H(+) = S-methyl-5'-thioinosine + NH4(+). In terms of biological role, catalyzes the deamination of 5-methylthioadenosine and S-adenosyl-L-homocysteine into 5-methylthioinosine and S-inosyl-L-homocysteine, respectively. Is also able to deaminate adenosine. The sequence is that of 5-methylthioadenosine/S-adenosylhomocysteine deaminase from Aquifex aeolicus (strain VF5).